Consider the following 130-residue polypeptide: Small ribosomal subunit protein uS11c (130 aa).

It belongs to the universal ribosomal protein uS11 family. In terms of assembly, part of the 30S ribosomal subunit.

Its subcellular location is the plastid. It localises to the chloroplast. This chain is Small ribosomal subunit protein uS11c, found in Pinus thunbergii (Japanese black pine).